Consider the following 218-residue polypeptide: Ribose-5-phosphate isomerase A (218 aa).

Substrate-binding positions include 28–31 (TGST), 81–84 (DGAD), and 94–97 (KGGG). Catalysis depends on Glu103, which acts as the Proton acceptor. Residue Lys121 coordinates substrate.

Belongs to the ribose 5-phosphate isomerase family. Homodimer.

It carries out the reaction aldehydo-D-ribose 5-phosphate = D-ribulose 5-phosphate. It functions in the pathway carbohydrate degradation; pentose phosphate pathway; D-ribose 5-phosphate from D-ribulose 5-phosphate (non-oxidative stage): step 1/1. Its function is as follows. Catalyzes the reversible conversion of ribose-5-phosphate to ribulose 5-phosphate. The chain is Ribose-5-phosphate isomerase A from Aliivibrio salmonicida (strain LFI1238) (Vibrio salmonicida (strain LFI1238)).